Here is a 754-residue protein sequence, read N- to C-terminus: Exocyst complex component EXO84A (754 aa).

Disordered stretches follow at residues 514–540 (RILPQGTSQSTPRRGSSDRQNRPEQRE) and 734–754 (GHGERDVTSPSVSSAKSYTSN). Over residues 518–527 (QGTSQSTPRR) the composition is skewed to polar residues. Basic and acidic residues predominate over residues 528–540 (GSSDRQNRPEQRE). Residues 741-754 (TSPSVSSAKSYTSN) are compositionally biased toward polar residues.

Belongs to the EXO84 family. The exocyst complex is composed of SEC3, SEC5, SEC6, SEC8, SEC10, EXO70A1 and EXO84.

Its function is as follows. Component of the exocyst complex involved in the docking of exocytic vesicles with fusion sites on the plasma membrane during regulated or polarized secretion. Involved in polarized cell growth and organ morphogenesis. During cytokinesis, involved in cell plate initiation, cell plate maturation and formation of new primary cell wall. The protein is Exocyst complex component EXO84A (EXO84A) of Arabidopsis thaliana (Mouse-ear cress).